The sequence spans 615 residues: Mitochondrial distribution and morphology protein 34 (615 aa).

An SMP-LTD domain is found at Met1–Leu195. 3 disordered regions span residues Ser293 to Ser313, Ala346 to Asp566, and Pro596 to Arg615. Residues Thr301–Ser313 show a composition bias toward polar residues. Low complexity predominate over residues Ala346 to Gly355. The span at Arg356–Arg367 shows a compositional bias: basic residues. 3 stretches are compositionally biased toward polar residues: residues Ile384–Pro403, Asp435–Ser446, and Val457–Arg499. Over residues Gln517–Gln557 the composition is skewed to low complexity. Positions Pro596–Asp606 are enriched in basic and acidic residues.

It belongs to the MDM34 family. As to quaternary structure, component of the ER-mitochondria encounter structure (ERMES) or MDM complex, composed of mmm-1, mdm10, mdm12 and mdm34.

Its subcellular location is the mitochondrion outer membrane. Its function is as follows. Component of the ERMES/MDM complex, which serves as a molecular tether to connect the endoplasmic reticulum (ER) and mitochondria. Components of this complex are involved in the control of mitochondrial shape and protein biogenesis, and function in nonvesicular lipid trafficking between the ER and mitochondria. Mdm34 is required for the interaction of the ER-resident membrane protein mmm-1 and the outer mitochondrial membrane-resident beta-barrel protein mdm10. The chain is Mitochondrial distribution and morphology protein 34 from Neurospora crassa (strain ATCC 24698 / 74-OR23-1A / CBS 708.71 / DSM 1257 / FGSC 987).